The sequence spans 367 residues: Choline-phosphate cytidylyltransferase A (367 aa).

Position 1 is an N-acetylmethionine (Met1). Positions 1–31 are disordered; sequence MDAQSSAKVNSRKRRKEVPGPNGATEEDGIP. Residue Lys8 is modified to N6-acetyllysine. Positions 84, 85, 92, and 122 each coordinate CTP. Positions 122 and 151 each coordinate phosphocholine. Positions 168, 169, 173, 195, 196, 197, and 200 each coordinate CTP. 2 amphipathic regions span residues 228–287 and 298–315; these read KELN…EFIG and ALKH…QAIS. The residue at position 233 (Ser233) is a Phosphoserine. Residues 272-293 are autoinhibitory (AI); it reads IDLIQKWEEKSREFIGSFLEMF. Residues 313–367 are disordered; the sequence is AISPKQSPSSSPTHERSPSPSFRWPFSGKTSPSSSPASLSRCKAVTCDISEDEED. Ser315 carries the phosphoserine; by PKC modification. Over residues 315–324 the composition is skewed to polar residues; sequence SPKQSPSSSP. Phosphoserine occurs at positions 319, 321, 322, and 323. Repeat 1 spans residues 319–324; that stretch reads SPSSSP. The interval 319 to 348 is 3 X repeats; sequence SPSSSPTHERSPSPSFRWPFSGKTSPSSSP. Thr325 carries the phosphothreonine modification. A phosphoserine mark is found at Ser329 and Ser331. A 2; approximate repeat occupies 329-333; it reads SPSPS. A compositionally biased stretch (low complexity) spans 330–352; sequence PSPSFRWPFSGKTSPSSSPASLS. Ser333 carries the post-translational modification Phosphoserine; by PKC. A Phosphothreonine modification is found at Thr342. 6 positions are modified to phosphoserine: Ser343, Ser345, Ser346, Ser347, Ser350, and Ser352. Repeat unit 3 spans residues 343 to 348; sequence SPSSSP. Thr358 is subject to Phosphothreonine. Ser362 is subject to Phosphoserine; by CK2.

It belongs to the cytidylyltransferase family. In terms of assembly, homodimer. Post-translationally, the serine residues of the C-terminus are phosphorylated. The inactive soluble form is stabilized by phosphorylation, the active membrane bound form is promoted by anionic lipids or diacylglycerol, and is stabilized by dephosphorylation. The N-terminus is blocked. In terms of processing, monoubiquitinated by the SCF(FBXL2) complex, leading to proteasomal degradation.

The protein localises to the cytoplasm. The protein resides in the cytosol. Its subcellular location is the membrane. It is found in the endoplasmic reticulum membrane. It localises to the nucleus. It catalyses the reaction phosphocholine + CTP + H(+) = CDP-choline + diphosphate. Its pathway is phospholipid metabolism; phosphatidylcholine biosynthesis; phosphatidylcholine from phosphocholine: step 1/2. Interconverts between an inactive cytosolic form and an active membrane-bound form. Activation involves disruption of an inhibitory interaction between helices at the base of the active site and the autoinhibitory (AI) region. Activated by N-methylethanolamine. Activated by oleic acid-containing phosphatidylcholine vesicles. Functionally, catalyzes the key rate-limiting step in the CDP-choline pathway for phosphatidylcholine biosynthesis. This Rattus norvegicus (Rat) protein is Choline-phosphate cytidylyltransferase A (Pcyt1a).